The chain runs to 247 residues: Inhibitory synaptic factor 1 (247 aa).

Residues 30–65 (RAVIGQLEGILRDLKEVAKELKEVVEQIDRLTSDFE) are a coiled coil. 3 disordered regions span residues 69 to 90 (DTDDWTPGTVSSTSSSEKGGPL), 112 to 166 (ASTP…RDRV), and 180 to 217 (DDSEDPPYGQETPRDPPRATAPCAVMKSKPGGLTGVRK). A compositionally biased stretch (polar residues) spans 76–85 (GTVSSTSSSE).

It belongs to the INSYN1 family.

It is found in the postsynaptic density. In terms of biological role, may be a component of the protein machinery at the inhibitory synapses, probably acting as a scaffold. The sequence is that of Inhibitory synaptic factor 1 from Xenopus laevis (African clawed frog).